The primary structure comprises 149 residues: Cyanate hydratase (149 aa).

Residues Arg90, Glu93, and Ser116 contribute to the active site.

The protein belongs to the cyanase family.

It catalyses the reaction cyanate + hydrogencarbonate + 3 H(+) = NH4(+) + 2 CO2. Its function is as follows. Catalyzes the reaction of cyanate with bicarbonate to produce ammonia and carbon dioxide. In Synechocystis sp. (strain ATCC 27184 / PCC 6803 / Kazusa), this protein is Cyanate hydratase.